The following is a 197-amino-acid chain: Glycerol-3-phosphate acyltransferase (197 aa).

A run of 5 helical transmembrane segments spans residues 5–25 (IYIA…GLIL), 54–74 (GLAA…VIIA), 80–100 (AEAA…PVWL), 112–132 (IGVL…LWLA), and 153–173 (IFLW…LTLL).

The protein belongs to the PlsY family. Probably interacts with PlsX.

The protein localises to the cell inner membrane. It catalyses the reaction an acyl phosphate + sn-glycerol 3-phosphate = a 1-acyl-sn-glycero-3-phosphate + phosphate. It participates in lipid metabolism; phospholipid metabolism. In terms of biological role, catalyzes the transfer of an acyl group from acyl-phosphate (acyl-PO(4)) to glycerol-3-phosphate (G3P) to form lysophosphatidic acid (LPA). This enzyme utilizes acyl-phosphate as fatty acyl donor, but not acyl-CoA or acyl-ACP. In Rhodopseudomonas palustris (strain HaA2), this protein is Glycerol-3-phosphate acyltransferase.